We begin with the raw amino-acid sequence, 160 residues long: Small ribosomal subunit protein uS7 (160 aa).

It belongs to the universal ribosomal protein uS7 family. In terms of assembly, part of the 30S ribosomal subunit. Contacts proteins S9 and S11.

Functionally, one of the primary rRNA binding proteins, it binds directly to 16S rRNA where it nucleates assembly of the head domain of the 30S subunit. Is located at the subunit interface close to the decoding center, probably blocks exit of the E-site tRNA. The polypeptide is Small ribosomal subunit protein uS7 (Ehrlichia canis (strain Jake)).